Consider the following 583-residue polypeptide: Proline--tRNA ligase (583 aa).

The protein belongs to the class-II aminoacyl-tRNA synthetase family. ProS type 1 subfamily. Homodimer.

It localises to the cytoplasm. The enzyme catalyses tRNA(Pro) + L-proline + ATP = L-prolyl-tRNA(Pro) + AMP + diphosphate. Catalyzes the attachment of proline to tRNA(Pro) in a two-step reaction: proline is first activated by ATP to form Pro-AMP and then transferred to the acceptor end of tRNA(Pro). As ProRS can inadvertently accommodate and process non-cognate amino acids such as alanine and cysteine, to avoid such errors it has two additional distinct editing activities against alanine. One activity is designated as 'pretransfer' editing and involves the tRNA(Pro)-independent hydrolysis of activated Ala-AMP. The other activity is designated 'posttransfer' editing and involves deacylation of mischarged Ala-tRNA(Pro). The misacylated Cys-tRNA(Pro) is not edited by ProRS. This is Proline--tRNA ligase from Aromatoleum aromaticum (strain DSM 19018 / LMG 30748 / EbN1) (Azoarcus sp. (strain EbN1)).